The primary structure comprises 1985 residues: MENSHPHHHHQQPPPQPGPSGERRNHHWRSYKLMIDPALKKGHHKLYRYDGQHFSLAMSSNRPVEIVEDPRVVGIWTKNKELELSVPKFKIDEFYVGPVPPKQVTFAKLNDNVRENFLRDMCKKYGEVEEVEILYNPKTKKHLGIAKVVFATVRGAKEAVQHLHSTSVMGNIIHVELDTKGETRMRFYELLVTGRYTPQTLPVGELDAISPIVSETLQLSDALKRLKDGSLSAGCGSGSSSVTPNSGGTPFSQDTAYSSCRLDTPNSYGQGTPITPRLGTPFSQDSSYSSRQPTPSYLFSQDPTATFKARRHESKFTDAYNRRHEHHYVHNSAVAGATAPFRGSSDLSFGTVGSSGTPFKAQSQDATTFAHTPPPAQTATASGFKSAFSPYQTPAPPFPPPPEEPTATAAFGSRDSGEFRRAPAPPPLPPAEPPAKEKPGTPPGPPPPDSNSMELGGRPTFGWSPEPCDSPGTPTLESSPAGPEKPHDSLDSRIEMLLKEQRTKLPFLREQDSDTEIQMEGSPISSSSSQLSPLSHFGTNSQPGFRGPSPPSSRPSSTGLEDISPTPLPDSDEDEDLGLGLGPRPPPEPGPPDPMGLLGQTAEVDLDLAGDRTPTSERMDEGQQSSGEDMEISDDEMPSAPITSADCPKPMVVTPGAGAVAAPNVLAPNLPLPPPPGFPPLPPPPPPPPPQPGFPMPPPLPPPPPPPPPAHPAVTVPPPPLPAPPGVPPPPILPPLPPFPPGLFPVMQVDMSHVLGGQWGGMPMSFQMQTQMLSRLMTGQGACPYPPFMAAAAAAASAGLQFVNLPPYRSPFSLSNSGPGRGQHWPPLPKFDPSVPPPGYIPRQEDPHKATVDGVLLVVLKELKAIMKRDLNRKMVEVVAFRAFDEWWDKKERMAKASLTPVKSGEHKDEDRPKPKDRIASCLLESWGKGEGLGYEGLGLGIGLRGAIRLPSFKVKRKEPPDTASSGDQKRLRPSTSVDEEDEESERERDRDIADAPCELTKRDPKSVGVRRRPGRPLELDSGGEEDEKESLSASSSSSASSSSGSSTTSPSSSASDKEEEDRESTEEEEEEEEEEAEEEEEEGPRSRISSPSSSSSSDKDDEDDNEADSDGQIDSDIDDQGAPLSEASEKDNGDSEEEETESITTSKAPAESSSSSSESSGSSEFESSSESESSSSSSEDEEEMTVPGVEEEEEEEEEEEKETAMAAATVVAMAEESMPPAGGQDFEQDRAEVPLGPRGPMRESLGTEEEVDIEAEDEVPEMQAPELEEPPLPMGARKLEGSPEPPEEPGPNTQGDMLLSPELPARETEEAQLPSPPEHGPESDLDMEPEPPPMLSLPLQPPLPPPRLLRPPSPPPEPETPEPPKPPVPLEPPPEDHPPRTPGLCGSLAKSQSTETVPATPGGEPPLSGSSSGLSLSSPQVPGSPFSYPSPSPGLSSGGLPRTPGRDFSFTPTFPEPSGPLLLPVCPLPTGRRDERTGPLASPVLLETGLPLPLPLPLPLPLALPVPVLRAQPRPPPQLPPLLPATLAPCPTPIKRKPGRPRRSPPSMLSLDGPLVRPPPGPALGRDLLLLPGQPPAPIFPSAHDPRAVTLDFRNTGIPAPPPPLPPQPPPPPPPPPVESTKLPFKELDNQWPSEAIPPGPRRDEVTEEYVDLAKVRGPWRRPPKKRHEDLVAPSASPEPSPPQPLFRPRSEFEEMTILYDIWNGGIDEEDIRFLCVTYERLLQQDNGMDWLNDTLWVYHPSTSLSSAKKKKREDGIREHVTGCARSEGFYTIDKKDKLRYLNSSRASTDEPPMDTQGMSIPAQPHASTRAGSERRSEQRRLLSSFTGSCDSDLLKFNQLKFRKKKLKFCKSHIHDWGLFAMEPIAADEMVIEYVGQNIRQVIADMREKRYEDEGIGSSYMFRVDHDTIIDATKCGNFARFINHSCNPNCYAKVITVESQKKIVIYSKQHINVNEEITYDYKFPIEDVKIPCLCGSENCRGTLN.

The span at 1 to 11 shows a compositional bias: basic residues; that stretch reads MENSHPHHHHQ. The tract at residues 1–25 is disordered; it reads MENSHPHHHHQQPPPQPGPSGERRN. Positions 67-97 are interaction with WDR82; sequence VEDPRVVGIWTKNKELELSVPKFKIDEFYVG. Residues 92-180 form the RRM domain; sequence DEFYVGPVPP…NIIHVELDTK (89 aa). 5 disordered regions span residues 234 to 304, 353 to 710, 955 to 1480, 1519 to 1624, and 1658 to 1687; these read GCGS…QDPT, GSSG…PPPA, VKRK…RTGP, QLPP…STKL, and RGPW…PQPL. Composition is skewed to polar residues over residues 242 to 258, 264 to 273, 281 to 304, and 353 to 365; these read VTPN…TAYS, TPNSYGQGTP, PFSQ…QDPT, and GSSG…QSQD. The segment covering 366-381 has biased composition (low complexity); it reads ATTFAHTPPPAQTATA. 3 stretches are compositionally biased toward pro residues: residues 393-404, 423-433, and 440-449; these read TPAPPFPPPPEE, PAPPPLPPAEP, and GTPPGPPPPD. The span at 484 to 512 shows a compositional bias: basic and acidic residues; sequence EKPHDSLDSRIEMLLKEQRTKLPFLREQD. Positions 522-535 are enriched in low complexity; it reads SPISSSSSQLSPLS. The segment covering 583-594 has biased composition (pro residues); that stretch reads PRPPPEPGPPDP. Positions 628 to 637 are enriched in acidic residues; the sequence is EDMEISDDEM. The span at 650–669 shows a compositional bias: low complexity; that stretch reads PMVVTPGAGAVAAPNVLAPN. Residues 670–710 are compositionally biased toward pro residues; it reads LPLPPPPGFPPLPPPPPPPPPQPGFPMPPPLPPPPPPPPPA. S977 and S985 each carry phosphoserine. The span at 986-1006 shows a compositional bias: basic and acidic residues; that stretch reads ERERDRDIADAPCELTKRDPK. S1022 bears the Phosphoserine mark. Low complexity predominate over residues 1032-1055; that stretch reads LSASSSSSASSSSGSSTTSPSSSA. The span at 1058-1083 shows a compositional bias: acidic residues; sequence KEEEDRESTEEEEEEEEEEAEEEEEE. A compositionally biased stretch (low complexity) spans 1087–1097; the sequence is SRISSPSSSSS. The span at 1100–1120 shows a compositional bias: acidic residues; that stretch reads KDDEDDNEADSDGQIDSDIDD. The segment covering 1143 to 1178 has biased composition (low complexity); that stretch reads SITTSKAPAESSSSSSESSGSSEFESSSESESSSSS. Acidic residues predominate over residues 1179–1202; the sequence is SEDEEEMTVPGVEEEEEEEEEEEK. Residues 1205 to 1217 show a composition bias toward low complexity; it reads AMAAATVVAMAEE. Positions 1247 to 1261 are enriched in acidic residues; it reads GTEEEVDIEAEDEVP. A phosphoserine mark is found at S1283, S1301, and S1354. Residues 1331–1373 show a composition bias toward pro residues; the sequence is EPPPMLSLPLQPPLPPPRLLRPPSPPPEPETPEPPKPPVPLEP. Over residues 1402-1442 the composition is skewed to low complexity; sequence PGGEPPLSGSSSGLSLSSPQVPGSPFSYPSPSPGLSSGGLP. The segment covering 1535–1544 has biased composition (basic residues); the sequence is IKRKPGRPRR. Pro residues-rich tracts occupy residues 1600-1619 and 1678-1687; these read PAPP…PPPV and SPEPSPPQPL. 2 positions are modified to phosphoserine: S1678 and S1682. Positions 1764 to 1769 match the WDR5 interaction motif (WIN) motif; that stretch reads GCARSE. The interval 1786–1819 is disordered; the sequence is SRASTDEPPMDTQGMSIPAQPHASTRAGSERRSE. Residues 1817–1822 carry the RxxxRR motif motif; sequence RSEQRR. The SET domain maps to 1846-1963; that stretch reads KKLKFCKSHI…VNEEITYDYK (118 aa). S-adenosyl-L-methionine is bound at residue Y1962. The Post-SET domain maps to 1969 to 1985; that stretch reads VKIPCLCGSENCRGTLN.

This sequence belongs to the class V-like SAM-binding methyltransferase superfamily. Component of the SET1B/COMPASS complex composed of the catalytic subunit SETD1B, WDR5, WDR82, RBBP5, ASH2L/ASH2, CXXC1/CFP1, HCFC1, DPY30 homotrimer and BOD1. Forms a core complex with the evolutionary conserved subcomplex WRAD composed of WDR5, RBBP5, ASH2L/ASH2 and DPY30 subunits; WRAD differentially stimulates the methyltransferase activity. Interacts with HCFC1 and ASH2L/ASH2. Interacts (via the RRM domain) with WDR82. Interacts (via the RRM domain) with hyperphosphorylated C-terminal domain (CTD) of RNA polymerase II large subunit (POLR2A) only in the presence of WDR82. Binds specifically to CTD heptad repeats phosphorylated on 'Ser-5' of each heptad. Interacts with RBM15. Interacts (via WIN motif) with WDR5. As to expression, widely expressed.

The protein resides in the nucleus. It localises to the nucleus speckle. Its subcellular location is the chromosome. The protein localises to the cytoplasm. It carries out the reaction L-lysyl(4)-[histone H3] + S-adenosyl-L-methionine = N(6)-methyl-L-lysyl(4)-[histone H3] + S-adenosyl-L-homocysteine + H(+). The catalysed reaction is N(6)-methyl-L-lysyl(4)-[histone H3] + S-adenosyl-L-methionine = N(6),N(6)-dimethyl-L-lysyl(4)-[histone H3] + S-adenosyl-L-homocysteine + H(+). The enzyme catalyses N(6),N(6)-dimethyl-L-lysyl(4)-[histone H3] + S-adenosyl-L-methionine = N(6),N(6),N(6)-trimethyl-L-lysyl(4)-[histone H3] + S-adenosyl-L-homocysteine + H(+). Its function is as follows. Histone methyltransferase that catalyzes methyl group transfer from S-adenosyl-L-methionine to the epsilon-amino group of 'Lys-4' of histone H3 (H3K4) via a non-processive mechanism. Part of chromatin remodeling machinery, forms H3K4me1, H3K4me2 and H3K4me3 methylation marks at active chromatin sites where transcription and DNA repair take place. Plays an essential role in regulating the transcriptional programming of multipotent hematopoietic progenitor cells and lymphoid lineage specification during hematopoiesis. In Mus musculus (Mouse), this protein is Histone-lysine N-methyltransferase SETD1B (Setd1b).